Consider the following 345-residue polypeptide: Dihydroorotate dehydrogenase (quinone) (345 aa).

FMN is bound by residues 65-69 (AGLDK) and Thr89. Lys69 lines the substrate pocket. Position 114–118 (114–118 (NRMGF)) interacts with substrate. FMN-binding residues include Asn142 and Asn175. Asn175 serves as a coordination point for substrate. The active-site Nucleophile is the Ser178. Position 180 (Asn180) interacts with substrate. Lys220 and Thr248 together coordinate FMN. 249–250 (NT) is a binding site for substrate. FMN is bound by residues Gly271, Gly300, and 321 to 322 (YT).

Belongs to the dihydroorotate dehydrogenase family. Type 2 subfamily. As to quaternary structure, monomer. FMN serves as cofactor.

Its subcellular location is the cell membrane. The catalysed reaction is (S)-dihydroorotate + a quinone = orotate + a quinol. Its pathway is pyrimidine metabolism; UMP biosynthesis via de novo pathway; orotate from (S)-dihydroorotate (quinone route): step 1/1. In terms of biological role, catalyzes the conversion of dihydroorotate to orotate with quinone as electron acceptor. This Burkholderia cenocepacia (strain HI2424) protein is Dihydroorotate dehydrogenase (quinone).